Here is a 393-residue protein sequence, read N- to C-terminus: Homogentisate phytyltransferase 1, chloroplastic (393 aa).

The transit peptide at methionine 1–arginine 36 directs the protein to the chloroplast. Transmembrane regions (helical) follow at residues threonine 108–serine 128, leucine 133–valine 153, tyrosine 170–phenylalanine 190, proline 205–leucine 227, phenylalanine 232–phenylalanine 252, leucine 271–isoleucine 291, valine 314–alanine 334, phenylalanine 338–alanine 358, and isoleucine 371–phenylalanine 391.

The protein belongs to the UbiA prenyltransferase family.

It localises to the plastid. It is found in the chloroplast membrane. It catalyses the reaction phytyl diphosphate + homogentisate + H(+) = 2-methyl-6-phytyl-1,4-benzene-1,4-diol + CO2 + diphosphate. The protein operates within cofactor biosynthesis; tocopherol biosynthesis. In terms of biological role, involved in the synthesis of tocopherol (vitamin E). Catalyzes the condensation of homogentisate and phytyl diphosphate to form dimethylphytylhydrquinone. Low activity with geranylgeranyl diphosphate as substrate, but no activity with farnesyl diphosphate or solanesyl diphosphate. Tocopherol functions to limit lipid oxidation during seed desiccation, quiescence and germination and early seedling development. Protects thylakoid membrane lipids from photooxidation and is required for low-temperature adaptation. The sequence is that of Homogentisate phytyltransferase 1, chloroplastic (HPT1) from Arabidopsis thaliana (Mouse-ear cress).